The chain runs to 699 residues: Glycine--tRNA ligase beta subunit (699 aa).

This sequence belongs to the class-II aminoacyl-tRNA synthetase family. Tetramer of two alpha and two beta subunits.

It localises to the cytoplasm. It carries out the reaction tRNA(Gly) + glycine + ATP = glycyl-tRNA(Gly) + AMP + diphosphate. The chain is Glycine--tRNA ligase beta subunit from Methylobacterium radiotolerans (strain ATCC 27329 / DSM 1819 / JCM 2831 / NBRC 15690 / NCIMB 10815 / 0-1).